Reading from the N-terminus, the 324-residue chain is Putative HTH-type transcriptional regulatory protein UNCMA_15260 (324 aa).

The region spanning L132–I189 is the HTH cro/C1-type domain. Residues L143–S162 constitute a DNA-binding region (H-T-H motif).

The sequence is that of Putative HTH-type transcriptional regulatory protein UNCMA_15260 from Methanocella arvoryzae (strain DSM 22066 / NBRC 105507 / MRE50).